The sequence spans 386 residues: Patatin group M-2 (386 aa).

The first 23 residues, 1–23 (MATTKSFLILFFMILATTSSTCA), serve as a signal peptide directing secretion. The PNPLA domain occupies 32–229 (LSIDGGGIKG…TVGDPALLSL (198 aa)). Positions 36–41 (GGGIKG) match the GXGXXG motif. The GXSXG motif lies at 75 to 79 (GTSTG). Serine 77 acts as the Nucleophile in catalysis. Asparagine 115 carries N-linked (GlcNAc...) asparagine glycosylation. The active-site Proton acceptor is the aspartate 215. A DGA/G motif is present at residues 215–217 (DGG). A coiled-coil region spans residues 321 to 384 (ENALTGTTTE…DRKKLRANKA (64 aa)).

It belongs to the patatin family. Tuber.

The protein resides in the vacuole. In terms of biological role, probable lipolytic acyl hydrolase (LAH), an activity which is thought to be involved in the response of tubers to pathogens. In Solanum tuberosum (Potato), this protein is Patatin group M-2.